A 351-amino-acid polypeptide reads, in one-letter code: Gene 58 protein (351 aa).

Helical transmembrane passes span 14 to 34 (FSTGLLASSSIVWSYIFATVF), 43 to 63 (QSVLYVWSLPIVQLAAIFCAV), 70 to 90 (LGLLLLLNCGIAFLSFISWSL), 97 to 117 (LVPGLFVINFLSLMIWLIVCF), 133 to 153 (LGFLASLTIHYCFNQFEIYLT), 155 to 175 (VMFAPFFICMLFGYIGFSHVW), 214 to 234 (LICLWFLLLAMAAGCIALVMF), 240 to 260 (GVSTYLYLFMVGNFCCGSLII), 268 to 288 (AVYSVVSLTAFFLILMGGYLF), 293 to 313 (LSMLAAVMFFCYFHANGCLLY), and 328 to 348 (FILNVCMLLNALLEITVLLAQ).

The protein belongs to the herpesviridae BMRF2 family.

The protein localises to the host membrane. The sequence is that of Gene 58 protein (58) from Connochaetes taurinus (Blue wildebeest).